The chain runs to 433 residues: 3-phosphoshikimate 1-carboxyvinyltransferase (433 aa).

Residues lysine 15, serine 16, and arginine 20 each coordinate 3-phosphoshikimate. Lysine 15 provides a ligand contact to phosphoenolpyruvate. 2 residues coordinate phosphoenolpyruvate: glycine 96 and arginine 124. Residues serine 169, glutamine 171, aspartate 318, and lysine 345 each contribute to the 3-phosphoshikimate site. Phosphoenolpyruvate is bound at residue glutamine 171. Catalysis depends on aspartate 318, which acts as the Proton acceptor. Residues arginine 349 and arginine 393 each coordinate phosphoenolpyruvate.

This sequence belongs to the EPSP synthase family. Monomer.

The protein resides in the cytoplasm. It carries out the reaction 3-phosphoshikimate + phosphoenolpyruvate = 5-O-(1-carboxyvinyl)-3-phosphoshikimate + phosphate. The protein operates within metabolic intermediate biosynthesis; chorismate biosynthesis; chorismate from D-erythrose 4-phosphate and phosphoenolpyruvate: step 6/7. Catalyzes the transfer of the enolpyruvyl moiety of phosphoenolpyruvate (PEP) to the 5-hydroxyl of shikimate-3-phosphate (S3P) to produce enolpyruvyl shikimate-3-phosphate and inorganic phosphate. The protein is 3-phosphoshikimate 1-carboxyvinyltransferase of Chlorobium phaeovibrioides (strain DSM 265 / 1930) (Prosthecochloris vibrioformis (strain DSM 265)).